A 104-amino-acid chain; its full sequence is Small ribosomal subunit protein uS10 (104 aa).

The protein belongs to the universal ribosomal protein uS10 family. In terms of assembly, part of the 30S ribosomal subunit.

Involved in the binding of tRNA to the ribosomes. This Gloeobacter violaceus (strain ATCC 29082 / PCC 7421) protein is Small ribosomal subunit protein uS10.